The chain runs to 146 residues: Decarboxylase dmxR15 (146 aa).

An EthD domain is found at 31–126 (PGMSEGDYRN…MHDHEVFADT (96 aa)).

Belongs to the tpcK family.

It catalyses the reaction atrochrysone carboxylate + H(+) = atrochrysone + CO2. Its pathway is secondary metabolite biosynthesis. In terms of biological role, decarboxylase; part of the gene cluster that mediates the biosynthesis of the dimeric xanthones cryptosporioptides. The pathway begins with the synthesis of atrochrysone thioester by the polyketide synthase dmx-nrPKS. The atrochrysone carboxyl ACP thioesterase dmxR1 then breaks the thioester bond and releases the atrochrysone carboxylic acid from dmx-nrPKS. Atrochrysone carboxylic acid is decarboxylated by the decarboxylase dmxR15, and oxidized by the anthrone oxygenase dmxR16 to yield emodin. Emodin is then reduced to emodin hydroquinone by the oxidoreductase dmxR7. A-ring reduction by the short chain dehydrogenase dmxR18, dehydration by the scytalone dehydratase-like protein dmxR17 and probable spontaneous re-oxidation, results in overall deoxygenation to chrysophanol. Baeyer-Villiger oxidation by the Baeyer-Villiger monooxygenase (BVMO) dmxR6 then yields monodictylactone in equilibrium with monodictyphenone. In the case of the cryptosporioptides biosynthesis, monodictylactone is reduced at C-12 to an alcohol (by the short chain dehydrogenases dmxR12 or dmxR8) and hydroxylated at C-5 by dmxR9, yielding the electron-rich aromatic which could eliminate H(2)O to form the ortho-quinonemethide, followed by tautomerisation to paraquinone and complete the formal reduction to produce the 10-methylgroup. Conjugate addition of C-4a-OH to the resulting paraquinone by the monooxygenase dmxR10 then gives cyclohexadienone, which is then reduced at C-5 by the short chain dehydrogenase dmxR3 to give the dihydroxanthone. The 6,7-epoxide in the cryptosporioptides could be introduced by the cytochrome P450 monooxygenase dmxL3. The highly reducing PKS dmxL2 manufactures butyrate, which is further carboxylated by dmxL1 to form ethylmalonate. It is not yet clear whether the carboxylation occurs while the butyrate is attached to the ACP of dmxL2, but this unusual fungal metabolite could then be esterified to O-5 by the O-acetyltransferase dmxR13. Finally, dimerization performed by dmxR5 gives the observed dimers cryptosporioptides A, B and C as the final products of the pathway. The chain is Decarboxylase dmxR15 from Cryptosporiopsis sp. (strain 8999).